A 1992-amino-acid chain; its full sequence is E3 ubiquitin-protein ligase TRIP12 (1992 aa).

A compositionally biased stretch (polar residues) spans 1–10 (MSNRPNNNPG). Disordered stretches follow at residues 1-398 (MSNR…DDSE), 797-817 (QRKPNPLANSNTSGYSESKKD), and 938-1080 (SLLT…ASKD). Ser-2 bears the N-acetylserine mark. Phosphoserine is present on Ser-12. Residues 18-27 (RNTAGAQPQD) show a composition bias toward polar residues. Residues 48 to 70 (DPDRANTSERQKTGQVPKKDNSR) show a composition bias toward basic and acidic residues. Residues Ser-77, Ser-85, and Ser-100 each carry the phosphoserine modification. Polar residues predominate over residues 78–88 (PDYNRTNSPSS). The segment covering 119–132 (EQQLKSAQSPSTSK) has biased composition (polar residues). Low complexity-rich tracts occupy residues 154–166 (SSCVKSGSGSEST) and 175–216 (PTKL…SSTV). An N6-acetyllysine modification is found at Lys-181. The span at 280–290 (PGSSKSETSKP) shows a compositional bias: polar residues. A phosphoserine mark is found at Ser-310 and Ser-312. Over residues 326 to 338 (QKTTGSCASTSRR) the composition is skewed to polar residues. Basic and acidic residues predominate over residues 346 to 358 (GAAEARRQEKMAD). Composition is skewed to polar residues over residues 360–371 (ESNQEAVNSSAA) and 803–812 (LANSNTSGYS). The WWE domain maps to 749 to 836 (MLKKGNAQNT…DPELAKSFIK (88 aa)). Ser-942 carries the phosphoserine modification. Residues 948–973 (TNGSGSMGSTTSVSSGTATAATHAAA) show a composition bias toward low complexity. A phosphoserine mark is found at Ser-991 and Ser-997. Residues 1001–1014 (KRKRLPKRGPRRPK) are compositionally biased toward basic residues. A Phosphoserine modification is found at Ser-1016. Positions 1017–1026 (PPRDDDKVDN) are enriched in basic and acidic residues. The segment covering 1029–1040 (KSPTTTQSPKSS) has biased composition (low complexity). Ser-1030 is modified (phosphoserine). A compositionally biased stretch (polar residues) spans 1041–1062 (FLASLNPKTWGRLSTQSNSNNI). Residues Ser-1317, Ser-1322, Ser-1329, and Ser-1376 each carry the phosphoserine modification. Phosphothreonine is present on Thr-1377. Disordered regions lie at residues 1407–1433 (SNKDCVGGKRGRAQTAPTKTSPRNAKK) and 1568–1587 (TNPEINQSDSQDSRVAPRLD). Position 1425 is an N6-acetyllysine (Lys-1425). Ser-1427 carries the phosphoserine modification. Residues 1496 to 1570 (EIIPTSEFIN…AMQRLLDTNP (75 aa)) are K-box. Positions 1885 to 1992 (PDHGYTHDSR…REGQQSFHLS (108 aa)) constitute an HECT domain. Cys-1959 acts as the Glycyl thioester intermediate in catalysis.

The protein belongs to the UPL family. K-HECT subfamily. In terms of assembly, interacts with MYC; leading to disrupt interaction with isoform p19ARF/ARF of CDKN2A. Interacts with TRADD; leading to disrupt interaction with isoform p19ARF/ARF of CDKN2A. Interacts with SMARCC1; leading to disrupt interaction with SMARCE1.

It localises to the nucleus. The protein resides in the nucleoplasm. The catalysed reaction is S-ubiquitinyl-[E2 ubiquitin-conjugating enzyme]-L-cysteine + [acceptor protein]-L-lysine = [E2 ubiquitin-conjugating enzyme]-L-cysteine + N(6)-ubiquitinyl-[acceptor protein]-L-lysine.. It functions in the pathway protein modification; protein ubiquitination. Its function is as follows. E3 ubiquitin-protein ligase involved in ubiquitin fusion degradation (UFD) pathway and regulation of DNA repair. Part of the ubiquitin fusion degradation (UFD) pathway, a process that mediates ubiquitination of protein at their N-terminus, regardless of the presence of lysine residues in target proteins. Acts as a key regulator of DNA damage response by acting as a suppressor of RNF168, an E3 ubiquitin-protein ligase that promotes accumulation of 'Lys-63'-linked histone H2A and H2AX at DNA damage sites, thereby acting as a guard against excessive spreading of ubiquitinated chromatin at damaged chromosomes. In normal cells, mediates ubiquitination and degradation of isoform p19ARF/ARF of CDKN2A, a lysine-less tumor suppressor required for p53/TP53 activation under oncogenic stress. In cancer cells, however, isoform p19ARF/ARF and TRIP12 are located in different cell compartments, preventing isoform p19ARF/ARF ubiquitination and degradation. Does not mediate ubiquitination of isoform p16-INK4a of CDKN2A. Also catalyzes ubiquitination of NAE1 and SMARCE1, leading to their degradation. Ubiquitination and degradation of target proteins is regulated by interaction with proteins such as MYC, TRADD or SMARCC1, which disrupt the interaction between TRIP12 and target proteins. Mediates ubiquitination of ASXL1: following binding to N(6)-methyladenosine methylated DNA, ASXL1 is ubiquitinated by TRIP12, leading to its degradation and subsequent inactivation of the PR-DUB complex. This Homo sapiens (Human) protein is E3 ubiquitin-protein ligase TRIP12 (TRIP12).